The sequence spans 78 residues: Defensin SD2 (78 aa).

The N-terminal stretch at 1–20 (MKSSMKMFAALLLVVMCLLA) is a signal peptide. Cystine bridges form between Cys34-Cys78, Cys45-Cys65, Cys51-Cys72, and Cys55-Cys74.

Belongs to the DEFL family. As to expression, highest expression in flowers and to a lesser extent in leaves. Lower levels in hypocotyls. No expression in roots and cotyledons.

Its subcellular location is the secreted. The protein localises to the cell wall. Functionally, may play a protective role in flowers by protecting the reproductive organs from potential pathogen attack. The sequence is that of Defensin SD2 (SD2) from Helianthus annuus (Common sunflower).